The chain runs to 61 residues: Photosystem II reaction center protein K (61 aa).

Positions 1-24 (MLNIFSLICICLHSTLYSSSFFLA) are excised as a propeptide. A helical transmembrane segment spans residues 36-56 (IVDFMPVIPLLFFLLAFVWQA).

It belongs to the PsbK family. PSII is composed of 1 copy each of membrane proteins PsbA, PsbB, PsbC, PsbD, PsbE, PsbF, PsbH, PsbI, PsbJ, PsbK, PsbL, PsbM, PsbT, PsbX, PsbY, PsbZ, Psb30/Ycf12, at least 3 peripheral proteins of the oxygen-evolving complex and a large number of cofactors. It forms dimeric complexes.

Its subcellular location is the plastid. It is found in the chloroplast thylakoid membrane. One of the components of the core complex of photosystem II (PSII). PSII is a light-driven water:plastoquinone oxidoreductase that uses light energy to abstract electrons from H(2)O, generating O(2) and a proton gradient subsequently used for ATP formation. It consists of a core antenna complex that captures photons, and an electron transfer chain that converts photonic excitation into a charge separation. This chain is Photosystem II reaction center protein K, found in Eucalyptus globulus subsp. globulus (Tasmanian blue gum).